A 373-amino-acid polypeptide reads, in one-letter code: Chaperone protein DnaJ (373 aa).

A J domain is found at 5–70 (CYYEVLEVSR…EKRSRYDRFG (66 aa)). A CR-type zinc finger spans residues 134 to 212 (GTEVELNIPV…CRGAGYVRKQ (79 aa)). Zn(2+) contacts are provided by Cys147, Cys150, Cys164, Cys167, Cys186, Cys189, Cys200, and Cys203. 4 CXXCXGXG motif repeats span residues 147–154 (CDTCEGSG), 164–171 (CSHCGGRG), 186–193 (CPACNGRG), and 200–207 (CSECRGAG).

The protein belongs to the DnaJ family. In terms of assembly, homodimer. The cofactor is Zn(2+).

Its subcellular location is the cytoplasm. Functionally, participates actively in the response to hyperosmotic and heat shock by preventing the aggregation of stress-denatured proteins and by disaggregating proteins, also in an autonomous, DnaK-independent fashion. Unfolded proteins bind initially to DnaJ; upon interaction with the DnaJ-bound protein, DnaK hydrolyzes its bound ATP, resulting in the formation of a stable complex. GrpE releases ADP from DnaK; ATP binding to DnaK triggers the release of the substrate protein, thus completing the reaction cycle. Several rounds of ATP-dependent interactions between DnaJ, DnaK and GrpE are required for fully efficient folding. Also involved, together with DnaK and GrpE, in the DNA replication of plasmids through activation of initiation proteins. This Maridesulfovibrio salexigens (strain ATCC 14822 / DSM 2638 / NCIMB 8403 / VKM B-1763) (Desulfovibrio salexigens) protein is Chaperone protein DnaJ.